Consider the following 102-residue polypeptide: Iron-sulfur cluster assembly protein CyaY (102 aa).

This sequence belongs to the frataxin family.

Involved in iron-sulfur (Fe-S) cluster assembly. May act as a regulator of Fe-S biogenesis. This is Iron-sulfur cluster assembly protein CyaY from Histophilus somni (strain 129Pt) (Haemophilus somnus).